The primary structure comprises 280 residues: Putative pyruvate, phosphate dikinase regulatory protein (280 aa).

An ADP-binding site is contributed by 154–161; sequence GVSRTSKT.

Belongs to the pyruvate, phosphate/water dikinase regulatory protein family. PDRP subfamily.

It carries out the reaction N(tele)-phospho-L-histidyl/L-threonyl-[pyruvate, phosphate dikinase] + ADP = N(tele)-phospho-L-histidyl/O-phospho-L-threonyl-[pyruvate, phosphate dikinase] + AMP + H(+). The enzyme catalyses N(tele)-phospho-L-histidyl/O-phospho-L-threonyl-[pyruvate, phosphate dikinase] + phosphate + H(+) = N(tele)-phospho-L-histidyl/L-threonyl-[pyruvate, phosphate dikinase] + diphosphate. Its function is as follows. Bifunctional serine/threonine kinase and phosphorylase involved in the regulation of the pyruvate, phosphate dikinase (PPDK) by catalyzing its phosphorylation/dephosphorylation. The protein is Putative pyruvate, phosphate dikinase regulatory protein of Nitrobacter hamburgensis (strain DSM 10229 / NCIMB 13809 / X14).